The chain runs to 140 residues: Hemoglobin subunit alpha (140 aa).

Residues 1-140 (LSAADKGHVK…VSTVLTSKYR (140 aa)) enclose the Globin domain. Serine 2 is subject to Phosphoserine. N6-succinyllysine is present on residues lysine 6 and lysine 10. At lysine 15 the chain carries N6-acetyllysine; alternate. N6-succinyllysine; alternate is present on lysine 15. A Phosphotyrosine modification is found at tyrosine 23. Phosphoserine is present on serine 34. Residue lysine 39 is modified to N6-succinyllysine. At serine 48 the chain carries Phosphoserine. An O2-binding site is contributed by histidine 57. Position 86 (histidine 86) interacts with heme b. Phosphoserine is present on serine 101. Threonine 107 is subject to Phosphothreonine. Position 123 is a phosphoserine (serine 123). Phosphothreonine occurs at positions 133 and 136. Serine 137 carries the phosphoserine modification.

The protein belongs to the globin family. As to quaternary structure, heterotetramer of two alpha chains and two beta chains. As to expression, red blood cells.

In terms of biological role, involved in oxygen transport from the lung to the various peripheral tissues. Its function is as follows. Hemopressin acts as an antagonist peptide of the cannabinoid receptor CNR1. Hemopressin-binding efficiently blocks cannabinoid receptor CNR1 and subsequent signaling. This chain is Hemoglobin subunit alpha (HBA), found in Tragelaphus strepsiceros (Greater kudu).